The following is a 784-amino-acid chain: Toll-like receptor 2 (784 aa).

The N-terminal stretch at 1-20 (MPRALWTAWVWAVIILSMEG) is a signal peptide. Residues 21-587 (ASHQASSLSC…ARLSLSECHR (567 aa)) lie on the Extracellular side of the membrane. Residues Cys-30 and Cys-36 are joined by a disulfide bond. LRR repeat units follow at residues 54–77 (VKSLDLSNNEITYVSNRDLQRCVN), 78–101 (LKTLRLGANEIHTVEEDSFFHLRN), 102–125 (LEYLDLSYNRLSNLSSSWFRSLYA), 126–150 (LKFLNLLGNVYKTLGETSLFSHLPN), 151–175 (LRTLKVGNSNSFTEIHEKDFTGLIF), 176–199 (LEELEISAQNLQIYVPKSLKSIQN), 200–223 (ISHLILHLKQPVLLVDILVDIVSS), 224–250 (LDCLELRDTNLHTFHFSEASISEMNTS), 251–278 (VKKLIFRNVQFTDESFVEVVKLFNYVSG), 279–308 (ILEVEFDDCTHDGIGDFRALSLDRIRHLGN), 309–337 (VETLTIRKLHIPQFFLFHDLSSIYPLTGK), 338–361 (VKRVTIESSKVFLVPCLLSQHLKS), 362–388 (LEYLDLSENLMSEETLKNSACKDAWPF), 389–414 (LQTLVLRQNRLKSLEKTGELLLTLEN), 415–437 (LNNLDISKNNFLSMPETCRWPGK), 438–457 (MKQLNLSSTRVHSLTQCLPQ), 458–478 (TLEILDVSNNNLDSFSLILPQ), 479–500 (LKELYISRNKLKTLPDASFLPV), and 501–524 (LSVMRISRNIINTFSKEQLDSFQQ). A glycan (N-linked (GlcNAc...) asparagine) is linked at Asn-114. Asn-199 carries N-linked (GlcNAc...) asparagine glycosylation. Asn-248 is a glycosylation site (N-linked (GlcNAc...) asparagine). Cysteines 353 and 382 form a disulfide. An intrachain disulfide couples Cys-432 to Cys-454. Asn-442 carries N-linked (GlcNAc...) asparagine glycosylation. One can recognise an LRRCT domain in the interval 525–579 (LKTLEAGGNNFICSCDFLSFTQGQQALGRVLVDWPAEYRCDSPSHVRGQRVQDAR). A helical transmembrane segment spans residues 588–608 (AAVVSAACCALFLLLLLTGVL). The Cytoplasmic portion of the chain corresponds to 609 to 784 (CHRFHGLWYM…WLNLRAAIRS (176 aa)). A TIR domain is found at 639 to 782 (ICYDAFVSYS…GFWLNLRAAI (144 aa)). Lys-754 participates in a covalent cross-link: Glycyl lysine isopeptide (Lys-Gly) (interchain with G-Cter in ubiquitin). The short motif at 761–778 (YLEWPVDETQQEGFWLNL) is the ATG16L1-binding motif element.

This sequence belongs to the Toll-like receptor family. Interacts with LY96, TLR1 and TLR6 (via extracellular domain). TLR2 seems to exist in heterodimers with either TLR1 or TLR6 before stimulation by the ligand. The heterodimers form bigger oligomers in response to their corresponding ligands as well as further heterotypic associations with other receptors such as CD14 and/or CD36. Binds MYD88 (via TIR domain). Interacts with TICAM1. Interacts with CNPY3. Interacts with ATG16L1. Interacts with PPP1R11. Interacts with TICAM2. Interacts with TIRAP. Post-translationally, ubiquitinated at Lys-754 by PPP1R11, leading to its degradation. Deubiquitinated by USP2. Glycosylation of Asn-442 is critical for secretion of the N-terminal ectodomain of TLR2.

Its subcellular location is the membrane. It localises to the cytoplasmic vesicle. The protein localises to the phagosome membrane. It is found in the membrane raft. Cooperates with LY96 to mediate the innate immune response to bacterial lipoproteins and other microbial cell wall components. Cooperates with TLR1 or TLR6 to mediate the innate immune response to bacterial lipoproteins or lipopeptides. Acts via MYD88 and TRAF6, leading to NF-kappa-B activation, cytokine secretion and the inflammatory response. May also promote apoptosis in response to lipoproteins. Forms activation clusters composed of several receptors depending on the ligand, these clusters trigger signaling from the cell surface and subsequently are targeted to the Golgi in a lipid-raft dependent pathway. Forms the cluster TLR2:TLR6:CD14:CD36 in response to diacylated lipopeptides and TLR2:TLR1:CD14 in response to triacylated lipopeptides. In Bubalus bubalis (Domestic water buffalo), this protein is Toll-like receptor 2 (TLR2).